Reading from the N-terminus, the 77-residue chain is MEKLTILLLVAAVLMSTQALIQSDGEKRQQAKINFLSXRKSTAESWWEGECKGWSVYCSWDWECCSGECTRYYCELW.

The signal sequence occupies residues 1-19; it reads MEKLTILLLVAAVLMSTQA. Residues 20-38 constitute a propeptide that is removed on maturation; that stretch reads LIQSDGEKRQQAKINFLSX. 3 disulfide bridges follow: Cys-51–Cys-65, Cys-58–Cys-69, and Cys-64–Cys-74.

The protein belongs to the conotoxin O2 superfamily. Expressed by the venom duct.

The protein resides in the secreted. The chain is Conotoxin Bt6.6 from Conus betulinus (Beech cone).